A 160-amino-acid polypeptide reads, in one-letter code: UPF0262 protein BSUIS_A0274 (160 aa).

The protein belongs to the UPF0262 family.

The chain is UPF0262 protein BSUIS_A0274 from Brucella suis (strain ATCC 23445 / NCTC 10510).